Consider the following 289-residue polypeptide: Cbb3-type cytochrome c oxidase subunit FixP (289 aa).

Topologically, residues 1–33 (MADKHKHVDEVSGVETTGHEWDGIRELNNPMPR) are cytoplasmic. A helical transmembrane segment spans residues 34–56 (WWVYSFYATIIWAIGYAIAYPSW). The Periplasmic segment spans residues 57–289 (PMLTEATKGM…VFVHSLGGGE (233 aa)). 2 Cytochrome c domains span residues 110–198 (FAVS…VSLT) and 205–286 (HLVQ…HSLG). Cys-123, Cys-126, His-127, Met-175, Cys-218, Cys-221, His-222, and Met-263 together coordinate heme c.

It belongs to the CcoP / FixP family. Component of the cbb3-type cytochrome c oxidase at least composed of FixN, FixO, FixQ and FixP. Heme c serves as cofactor.

The protein localises to the cell inner membrane. It participates in energy metabolism; oxidative phosphorylation. Functionally, C-type cytochrome. Part of the cbb3-type cytochrome c oxidase complex. FixP subunit is required for transferring electrons from donor cytochrome c via its heme groups to FixO subunit. From there, electrons are shuttled to the catalytic binuclear center of FixN subunit where oxygen reduction takes place. The complex also functions as a proton pump. The protein is Cbb3-type cytochrome c oxidase subunit FixP of Rhizobium meliloti (strain 1021) (Ensifer meliloti).